The chain runs to 593 residues: Cytochrome c oxidase polypeptide 1 (593 aa).

2 helical membrane-spanning segments follow: residues 5–25 and 71–91; these read ASSITLTVLMGVLLVGVVAVL and IGILYGVYGTIAFAWGGVSVL. His117 serves as a coordination point for Fe(II)-heme a. 6 helical membrane passes run 122 to 142, 154 to 174, 204 to 224, 246 to 266, 288 to 308, and 320 to 340; these read LFLFGTPMIAAFGNYFIPLLI, AIAFWLLPPGAILIWSGFLIP, GLHLTGVSATMGAINFIATIF, QSGLILFAFPLFGSALIMLLL, LFWFFGHPEVYVLVLPPMGIV, and LFGFKFVVYSTLAIGVLSFGV. Positions 294 and 298 each coordinate Cu cation. Positions 294 to 298 form a cross-link, 1'-histidyl-3'-tyrosine (His-Tyr); it reads HPEVY. Cu cation contacts are provided by His343 and His344. A run of 5 helical transmembrane segments spans residues 358 to 378, 401 to 421, 425 to 445, 467 to 487, and 506 to 526; these read FMAVSLAISIPSAVKVFNWIT, FIIGGVTGVFLAVIPIDLILH, YVVGHFHFIVYGAIGFALFAA, FWTALVGSNATFLAMLWLGYG, and LATVGAFLIGVSTLIWLFNMA. Heme a3 is bound at residue His429. His431 contacts Fe(II)-heme a. Residues 562–593 are disordered; sequence TTVLPDGGDEAQSEADAVTDGGQPAADSDTES.

This sequence belongs to the heme-copper respiratory oxidase family.

It is found in the cell membrane. The catalysed reaction is 4 Fe(II)-[cytochrome c] + O2 + 8 H(+)(in) = 4 Fe(III)-[cytochrome c] + 2 H2O + 4 H(+)(out). Its pathway is energy metabolism; oxidative phosphorylation. Cytochrome c oxidase is the component of the respiratory chain that catalyzes the reduction of oxygen to water. Subunits 1-3 form the functional core of the enzyme complex. CO I is the catalytic subunit of the enzyme. Electrons originating in cytochrome c are transferred via the copper A center of subunit 2 and heme A of subunit 1 to the bimetallic center formed by heme A3 and copper B. This chain is Cytochrome c oxidase polypeptide 1 (coxA2), found in Halobacterium salinarum (strain ATCC 700922 / JCM 11081 / NRC-1) (Halobacterium halobium).